The chain runs to 739 residues: Prestin (739 aa).

Topologically, residues Met-1 to Pro-76 are cytoplasmic. Residues Leu-77–Ala-106 traverse the membrane as a helical segment. Residues Ala-107 to Pro-109 lie on the Extracellular side of the membrane. The helical transmembrane segment at Pro-110–Phe-127 threads the bilayer. The Cytoplasmic portion of the chain corresponds to Gly-128–Phe-138. Residues Ala-139–Glu-152 form a helical membrane-spanning segment. At Ala-153–Val-169 the chain is on the extracellular side. Residues Asn-161 and Asn-164 are each glycosylated (N-linked (GlcNAc...) asparagine). The chain crosses the membrane as a helical span at residues Asn-170–Leu-199. At Arg-200–Thr-209 the chain is on the cytoplasmic side. The chain crosses the membrane as a helical span at residues Glu-210–Leu-233. Residues Gly-234–Leu-244 lie on the Extracellular side of the membrane. Positions Ser-245–Asn-256 form an intramembrane region, helical. Topologically, residues Ile-257–Asn-261 are extracellular. Residues Ile-262–Phe-285 traverse the membrane as a helical segment. Residues Lys-286–Pro-294 lie on the Cytoplasmic side of the membrane. A helical membrane pass occupies residues Gly-295–Met-310. At Leu-311–Asp-335 the chain is on the extracellular side. A helical membrane pass occupies residues Phe-336 to Tyr-370. Over Ser-371–Asp-373 the chain is Cytoplasmic. The helical transmembrane segment at Gly-374 to Phe-391 threads the bilayer. Residues His-392–Ser-399 lie on the Extracellular side of the membrane. The helical transmembrane segment at Met-400–Thr-409 threads the bilayer. Salicylate is bound at residue Ser-401. Over Gly-410–Thr-413 the chain is Cytoplasmic. The chain crosses the membrane as a helical span at residues Glu-414 to Phe-435. Residues Gln-436–Pro-439 are Extracellular-facing. Residues Thr-440–Lys-467 traverse the membrane as a helical segment. Residue Ser-468 is a topological domain, cytoplasmic. The chain crosses the membrane as a helical span at residues Lys-469–Leu-484. The Extracellular portion of the chain corresponds to Leu-485–Gly-486. The chain crosses the membrane as a helical span at residues Leu-487–Gln-507. The interval Arg-508 to Asp-731 is extended region for STAS domain. At Arg-508–His-739 the chain is on the cytoplasmic side. Residues Glu-528–Cys-726 enclose the STAS domain.

This sequence belongs to the SLC26A/SulP transporter (TC 2.A.53) family. In terms of assembly, homodimer. Interacts (via STAS domain) with CALM; this interaction is calcium-dependent. In terms of tissue distribution, expressed in hair cells of the auditory organs.

The protein localises to the cell membrane. It catalyses the reaction oxalate(in) + chloride(out) = oxalate(out) + chloride(in). The enzyme catalyses sulfate(out) + chloride(in) = sulfate(in) + chloride(out). Its activity is regulated as follows. Sulfate/chloride antiport activity is inhibited by salicylate; this inhibition is reversible. Electrogenic antiporter that exchanges sulfate or oxalate for chloride ion in a strictly coupled manner with a 1:1 stoichiometry. Adopts a dynamic conformation, which alternates between the exposure of the central binding site to the extra- and intracellular solutions leading to an inward-to-outward conformational transition during the transport cycle. Generates voltage-dependent charge movements resembling to the non-linear capacitance (NLC) of the cell membrane, but which are not associated to electromotile activity. This chain is Prestin, found in Danio rerio (Zebrafish).